Reading from the N-terminus, the 473-residue chain is Photosystem II CP43 reaction center protein (473 aa).

Residues 1 to 14 (MKILYSLRRFYHVE) constitute a propeptide that is removed on maturation. Residue T15 is modified to N-acetylthreonine. T15 bears the Phosphothreonine mark. A run of 5 helical transmembrane segments spans residues 69–93 (LFEVAHFVPEKPMYEQGLILLPHLA), 134–155 (LLGPETLEESFPFFGYVWKDRN), 178–200 (KALYFGGIYDTWAPGGGDVRKIT), 255–275 (KPFAWARRAFVWSGEAYLSYS), and 291–312 (WFNNTAYPSEFYGPTGPEASQA). E367 provides a ligand contact to [CaMn4O5] cluster. Residues 447 to 471 (RARAAAAGFEKGIDRDLEPVLYMTP) traverse the membrane as a helical segment.

It belongs to the PsbB/PsbC family. PsbC subfamily. As to quaternary structure, PSII is composed of 1 copy each of membrane proteins PsbA, PsbB, PsbC, PsbD, PsbE, PsbF, PsbH, PsbI, PsbJ, PsbK, PsbL, PsbM, PsbT, PsbX, PsbY, PsbZ, Psb30/Ycf12, at least 3 peripheral proteins of the oxygen-evolving complex and a large number of cofactors. It forms dimeric complexes. Requires Binds multiple chlorophylls and provides some of the ligands for the Ca-4Mn-5O cluster of the oxygen-evolving complex. It may also provide a ligand for a Cl- that is required for oxygen evolution. PSII binds additional chlorophylls, carotenoids and specific lipids. as cofactor.

The protein localises to the plastid. The protein resides in the chloroplast thylakoid membrane. Its function is as follows. One of the components of the core complex of photosystem II (PSII). It binds chlorophyll and helps catalyze the primary light-induced photochemical processes of PSII. PSII is a light-driven water:plastoquinone oxidoreductase, using light energy to abstract electrons from H(2)O, generating O(2) and a proton gradient subsequently used for ATP formation. This chain is Photosystem II CP43 reaction center protein, found in Oryza nivara (Indian wild rice).